Here is a 185-residue protein sequence, read N- to C-terminus: Prenylated Rab acceptor protein 1 (185 aa).

Residues 1–78 (MAAQKDQQKD…RNVEYYQSNY (78 aa)) are Cytoplasmic-facing. Positions 30–54 (AGREWLERRRATIRPWGSFVDQRRF) are required for interaction with prenylated RAB3A and VAMP2. 2 helical membrane passes run 79-94 (VFVF…VTSP) and 95-112 (MLLV…ILYL). Residues 113-131 (RTLQSKFVLFGREVSPAHQ) are Cytoplasmic-facing. The next 2 membrane-spanning stretches (helical) occupy residues 132–148 (YALA…LAGA) and 149–165 (GSAV…VIGS). Residues 165–185 (SHAAFHQIEAVDGEELQMEPV) are required for interaction with GDI1. Residues 166–185 (HAAFHQIEAVDGEELQMEPV) are Cytoplasmic-facing. A required for interaction with prenylated RAB3A and VAMP2 region spans residues 175 to 185 (VDGEELQMEPV). A homodimerization region spans residues 175-185 (VDGEELQMEPV).

The protein belongs to the PRA1 family. Homodimer. Interacts with VAMP2 (synaptobrevin-2), prenylated Rab proteins, GDI1, NRDG1 and PCLO.

The protein localises to the cell membrane. It is found in the cytoplasm. It localises to the golgi apparatus. The protein resides in the cytoplasmic vesicle. Its subcellular location is the secretory vesicle. The protein localises to the synaptic vesicle. In terms of biological role, general Rab protein regulator required for vesicle formation from the Golgi complex. May control vesicle docking and fusion by mediating the action of Rab GTPases to the SNARE complexes. In addition it inhibits the removal of Rab GTPases from the membrane by GDI1. In Sus scrofa (Pig), this protein is Prenylated Rab acceptor protein 1 (RABAC1).